Consider the following 1528-residue polypeptide: Cell surface antigen I/II (1528 aa).

Residues 1–50 form the signal peptide; sequence MLQKCKLEGIIICNEKRLLGAAKVKSGRTLSGALLGTAILASGAGQKALA. Positions 50–156 are disordered; it reads AEETSTTSTS…PEIKDDYSKQ (107 aa). Low complexity predominate over residues 51 to 68; sequence EETSTTSTSGGDTAVVGT. Composition is skewed to polar residues over residues 83–97 and 124–133; these read NPSSQAETSQAQARQ and TVSQDATVNK. Residues 142-154 show a composition bias toward basic and acidic residues; the sequence is ANQKEPEIKDDYS. 4 Ag I/II A repeats span residues 161 to 235, 236 to 315, 316 to 396, and 397 to 478; these read QKAT…QQAN, SDSQ…QAGN, AANE…QSGN, and AANE…KKDL. Disordered regions lie at residues 840–951 and 1459–1480; these read VPKV…VEPV and SNTVRTSTPEPKQPSPVDPKTT. The span at 855–879 shows a compositional bias: basic and acidic residues; that stretch reads TKPDEPTYEVEKELVDLPVEPKYEP. Residues 1459–1468 are compositionally biased toward polar residues; the sequence is SNTVRTSTPE. The short motif at 1503-1507 is the LPXTG sorting signal element; that stretch reads LPATG. A Pentaglycyl murein peptidoglycan amidated threonine modification is found at Thr1506. Positions 1507 to 1528 are cleaved as a propeptide — removed by sortase; the sequence is GDSSNAYLPLLGLVSLTAGFSC.

It belongs to the antigen I/II family.

Its subcellular location is the secreted. It is found in the cell wall. The polypeptide is Cell surface antigen I/II (Streptococcus downei (Streptococcus sobrinus)).